A 447-amino-acid polypeptide reads, in one-letter code: MNRRHLFAWLFRHLSLNGHLQCHVHRHSHQLTQIPLDTRLWVFRRNRNHTVHRLLNKNCSRRYCHQDTSMLWKHKALQKYMEDLNKEYQTLDHCLHHISASEGDRRSLTRRHAELAPLAVIYKEIQEAEQAIEELESMCKSLNKQDEKQLQELALEERQTIAQKINMLYSELFQSLLPKEKYDKNDVILEVTSGRTTGGDICQQFTREIFDMYQNYSSYKHWRFELLNYTPADYGGLHHAAARISGDNVYKHLKYEGGIHRVQRIPEVGLSSRMQRIHTGTMSVIVLPHPDEVDVKVDPKDLRIDTFRAKGAGGQHVNTTDSAVRLVHIPTGLVVECQQERSQIKNKEIALRVLRARLYQQIIEKDKCQQRSARKLQVGTRAQSERIRTYNFTQDRVTDHRIAYEVRNIKEFLCGEKCLDQLIQRLLQSADEEAITEFLDENLKSVK.

The N-terminal 63 residues, 1-63, are a transit peptide targeting the mitochondrion; that stretch reads MNRRHLFAWL…LLNKNCSRRY (63 aa). The interval 299–363 is GGQ domain; that stretch reads PKDLRIDTFR…LRARLYQQII (65 aa). Residues 313–315 carry the GGQ motif; that stretch reads GGQ. N5-methylglutamine is present on Gln315.

Belongs to the prokaryotic/mitochondrial release factor family. Methylation of glutamine in the GGQ triplet by HEMK1 is conserved from bacteria to mammals.

The protein localises to the mitochondrion. Functionally, mitochondrial peptide chain release factor that directs the termination of translation in response to the peptide chain non-canonical stop codons AGG and AGA. Non-canonical termination codons AGG and AGA are found at the end of MT-CO1/COX1 and MT-ND6/ND6 open reading frames, respectively. Recognizes non-canonical stop codons via a network of interactions between the codon, MTRF1 and the ribosomal RNA (rRNA): in contrast to other translation release factors, which identify the codon in the A-site via direct interactions of amino acid side chains with the bases, MTRF1 repositions the first 2 bases of the stop codon to use an intricate network of interactions that includes residues of the release factor, the rRNA of the small ribosomal subunit, as well as neighboring bases of the mRNA. The polypeptide is Peptide chain release factor 1, mitochondrial (MTRF1) (Bos taurus (Bovine)).